Consider the following 435-residue polypeptide: Glutamine synthetase (435 aa).

In terms of domain architecture, GS beta-grasp spans 12 to 94 (KGVKYFMISY…VAADCIMDDA (83 aa)). The GS catalytic domain occupies 100 to 435 (PRVVLKKLVA…EWEHQTTLDV (336 aa)). Mg(2+) is bound by residues E123, E125, E180, and E187. G232 contacts L-glutamate. A Mg(2+)-binding site is contributed by H236. S240 lines the ATP pocket. 2 residues coordinate L-glutamate: R291 and R315. ATP is bound by residues R315 and R320. E328 provides a ligand contact to Mg(2+). R330 contributes to the L-glutamate binding site.

It belongs to the glutamine synthetase family. As to quaternary structure, homooctamer. Mg(2+) is required as a cofactor.

The enzyme catalyses L-glutamate + NH4(+) + ATP = L-glutamine + ADP + phosphate + H(+). Inhibited by methionine sulfoximine, ADP and pyrophosphate, but not by various nitrogen-containing metabolites that inhibit other GS enzymes. Functionally, catalyzes the ATP-dependent biosynthesis of glutamine from glutamate and ammonia. The chain is Glutamine synthetase from Rhizobium meliloti (strain 1021) (Ensifer meliloti).